The following is an 812-amino-acid chain: Fibroblast growth factor receptor 1 (812 aa).

The signal sequence occupies residues 1–20; sequence MFSGMSLLLWGVLLGAALSV. The Extracellular segment spans residues 21–371; that stretch reads ARPPSTLPDE…PALLASPLQL (351 aa). The Ig-like C2-type 1 domain occupies 25-118; the sequence is STLPDEVAPK…YTVLCSVNVS (94 aa). A disulfide bond links Cys54 and Cys100. Asn76, Asn116, Asn133, Asn223, Asn236, Asn260, Asn292, Asn313, and Asn326 each carry an N-linked (GlcNAc...) asparagine glycan. A disordered region spans residues 121–153; sequence LPSAEDDDEDDDNSSSEEKAAENSKPNRPLWSH. The segment covering 124–135 has biased composition (acidic residues); the sequence is AEDDDEDDDNSS. Ig-like C2-type domains are found at residues 154-242 and 251-353; these read PEKM…YQLD and PILQ…AWLT. A disulfide bridge links Cys174 with Cys226. A disulfide bond links Cys273 and Cys337. The helical transmembrane segment at 372–393 threads the bilayer; the sequence is EIIIYCTGAAFVSAMVVTIIIF. Over 394–812 the chain is Cytoplasmic; that stretch reads KMKHPSKKSD…KYSNGGLKKR (419 aa). Phosphotyrosine; by autocatalysis is present on Tyr457. The 290-residue stretch at 472–761 folds into the Protein kinase domain; the sequence is LILGKPLGEG…LALSSNQEYL (290 aa). ATP is bound by residues 478 to 484, Lys508, 556 to 558, and Asn562; these read LGEGCFG and EYT. 2 positions are modified to phosphotyrosine; by autocatalysis: Tyr577 and Tyr579. Asp617 (proton acceptor) is an active-site residue. Arg621 and Asp635 together coordinate ATP. 4 positions are modified to phosphotyrosine; by autocatalysis: Tyr647, Tyr648, Tyr724, and Tyr760. The disordered stretch occupies residues 784-812; the sequence is SGEDSMFSHDPLPDEPCLPKYSNGGLKKR.

It belongs to the protein kinase superfamily. Tyr protein kinase family. Fibroblast growth factor receptor subfamily. As to quaternary structure, monomer. Homodimer after ligand binding. Interacts with il17rd. Autophosphorylated. Binding of FGF family members together with heparan sulfate proteoglycan or heparin promotes receptor dimerization and autophosphorylation on tyrosine residues. Autophosphorylation occurs in trans between the two FGFR molecules present in the dimer and proceeds in a highly ordered manner. Phosphotyrosine residues provide docking sites for interacting proteins and so are crucial for FGFR1 function and its regulation. In terms of processing, ubiquitinated. FGFR1 is rapidly ubiquitinated after autophosphorylation, leading to internalization and degradation. Post-translationally, N-glycosylated in the endoplasmic reticulum. The N-glycan chains undergo further maturation to an Endo H-resistant form in the Golgi apparatus.

It localises to the cell membrane. The protein localises to the nucleus. Its subcellular location is the cytoplasm. The protein resides in the cytosol. It is found in the cytoplasmic vesicle. The catalysed reaction is L-tyrosyl-[protein] + ATP = O-phospho-L-tyrosyl-[protein] + ADP + H(+). Present in an inactive conformation in the absence of bound ligand. Ligand binding leads to dimerization and activation by sequential autophosphorylation on tyrosine residues. Tyrosine-protein kinase that acts as a cell-surface receptor for fibroblast growth factors and plays an essential role in the regulation of embryonic development, cell proliferation, differentiation and migration. Required for normal mesoderm patterning and normal skeletogenesis. Phosphorylates PLCG1, FRS2, GAB1 and SHB. Ligand binding leads to the activation of several signaling cascades. Activation of PLCG1 leads to the production of the cellular signaling molecules diacylglycerol and inositol-1,4,5-trisphosphate. Phosphorylation of FRS2 triggers recruitment of GRB2, GAB1, PIK3R1 and SOS1, and mediates activation of RAS, MAPK1/ERK2, MAPK3/ERK1 and the MAP kinase signaling pathway, as well as of the AKT1 signaling pathway. Promotes phosphorylation of SHC1, STAT1 and PTPN11/SHP2. In the nucleus, enhances RPS6KA1 and CREB1 activity and contributes to the regulation of transcription. FGFR1 signaling is down-regulated by ubiquitination, internalization and degradation. In Xenopus laevis (African clawed frog), this protein is Fibroblast growth factor receptor 1 (fgfr1).